We begin with the raw amino-acid sequence, 462 residues long: Elongation factor 1-alpha 1 (462 aa).

Glycine 2 is modified (n,N,N-trimethylglycine). One can recognise a tr-type G domain in the interval 5-242 (KTHINIVVIG…DCILPPTRPT (238 aa)). The tract at residues 14–21 (GHVDSGKS) is G1. 14 to 21 (GHVDSGKS) is a GTP binding site. N6,N6,N6-trimethyllysine; alternate is present on lysine 36. Residue lysine 36 is modified to N6,N6-dimethyllysine; alternate. An N6-methyllysine; alternate modification is found at lysine 36. N6,N6-dimethyllysine is present on lysine 55. The segment at 70–74 (GITID) is G2. Position 79 is an N6,N6,N6-trimethyllysine; by EEF1AKMT1 (lysine 79). Residues 91–94 (DAPG) are G3. 153–156 (NKMD) contacts GTP. The segment at 153-156 (NKMD) is G4. Lysine 165 is subject to N6,N6,N6-trimethyllysine; alternate; by EEF1AKMT3. Lysine 165 is modified (N6,N6-dimethyllysine; alternate; by EEF1AKMT3). Lysine 165 bears the N6-acetyllysine; alternate mark. At lysine 165 the chain carries N6-methyllysine; alternate; by EEF1AKMT3. Position 172 is an N6-acetyllysine (lysine 172). 194–196 (SGW) lines the GTP pocket. Residues 194–196 (SGW) form a G5 region. Lysine 273 is subject to N6-acetyllysine. Residue serine 300 is modified to Phosphoserine; by TGFBR1. 5-glutamyl glycerylphosphorylethanolamine is present on glutamate 301. An N6,N6,N6-trimethyllysine; by EEF1AKMT2 modification is found at lysine 318. Glutamate 374 carries the 5-glutamyl glycerylphosphorylethanolamine modification. A Glycyl lysine isopeptide (Lys-Gly) (interchain with G-Cter in ubiquitin) cross-link involves residue lysine 385. N6-acetyllysine; alternate is present on lysine 392. Lysine 392 carries the post-translational modification N6-succinyllysine; alternate. The residue at position 432 (threonine 432) is a Phosphothreonine; by PASK. At lysine 439 the chain carries N6-acetyllysine.

Belongs to the TRAFAC class translation factor GTPase superfamily. Classic translation factor GTPase family. EF-Tu/EF-1A subfamily. Found in a nuclear export complex with XPO5, EEF1A1, Ran and aminoacylated tRNA. Interacts with PARP1 and TXK. Interacts with KARS1. May interact with ERGIC2. Interacts with IFIT1 (via TPR repeats 4-7). Interacts with DLC1, facilitating distribution to the membrane periphery and ruffles upon growth factor stimulation. Interacts with ZPR1; the interaction occurs in a epidermal growth factor (EGF)-dependent manner. Interacts with PPP1R16B. Interacts with SPHK1 and SPHK2; both interactions increase SPHK1 and SPHK2 kinase activity. Interacts with guanyl-nucleotide exchange factor EEF1B2. Interacts (via middle-region) with HTATIP2 (via N-terminus); the interaction is direct and competes with EEF1A1 binding to guanyl-nucleotide exchange factor EEF1B2, thereby inhibiting GDP for GTP exchange and reactivation of EEF1A1. Interacts with tRNA. ISGylated. In terms of processing, phosphorylated by TXK. Phosphorylation by PASK increases translation efficiency. Phosphorylated by ROCK2. Phosphorylation by TGFBR1 inhibits translation elongation. Post-translationally, trimethylated at Lys-79 by EEF1AKMT1. Methylated at Lys-165 by EEF1AKMT3, methylation by EEF1AKMT3 is dynamic as well as inducible by stress conditions, such as ER-stress, and plays a regulatory role on mRNA translation. Trimethylated at Lys-318 by EEF1AKMT2. Mono-, di-, and trimethylated at Lys-36 by EEF1AKMT4; trimethylated form is predominant. Methylation by EEF1AKMT4 contributes to the fine-tuning of translation rates for a subset of tRNAs. Trimethylated at Gly-2 by METTL13. Mono- and dimethylated at Lys-55 by METTL13; dimethylated form is predominant. Ubiquitinated at Lys-385 by RNF14 in response to ribosome collisions (ribosome stalling), leading to its degradation by the proteasome and rescue of stalled ribosomes.

The protein resides in the cytoplasm. The protein localises to the nucleus. It localises to the nucleolus. Its subcellular location is the cell membrane. It catalyses the reaction GTP + H2O = GDP + phosphate + H(+). Functionally, translation elongation factor that catalyzes the GTP-dependent binding of aminoacyl-tRNA (aa-tRNA) to the A-site of ribosomes during the elongation phase of protein synthesis. Base pairing between the mRNA codon and the aa-tRNA anticodon promotes GTP hydrolysis, releasing the aa-tRNA from EEF1A1 and allowing its accommodation into the ribosome. The growing protein chain is subsequently transferred from the P-site peptidyl tRNA to the A-site aa-tRNA, extending it by one amino acid through ribosome-catalyzed peptide bond formation. Also plays a role in the positive regulation of IFNG transcription in T-helper 1 cells as part of an IFNG promoter-binding complex with TXK and PARP1. Also plays a role in cytoskeleton organization by promoting actin bundling. The sequence is that of Elongation factor 1-alpha 1 (EEF1A1) from Bos taurus (Bovine).